The chain runs to 138 residues: MINNVVLIGRLTRDVELRYTPSNIANATFNLAVNRNFKNAAGDREADFINCVMWRQQAENLANWTKKGMLIGITGRIQTRSYENQQGQRIYVTEVVADSFQILEKRDNSTNQASMDDQLPPSFGNSQPMDISDDDLPF.

One can recognise an SSB domain in the interval 1 to 104; the sequence is MINNVVLIGR…VVADSFQILE (104 aa). Residues 107–138 are disordered; it reads DNSTNQASMDDQLPPSFGNSQPMDISDDDLPF. The short motif at 133 to 138 is the Important for interaction with partner proteins element; it reads DDDLPF.

As to quaternary structure, homotetramer.

Its function is as follows. Plays an important role in DNA replication, recombination and repair. Binds to ssDNA and to an array of partner proteins to recruit them to their sites of action during DNA metabolism. This chain is Single-stranded DNA-binding protein 4 (ssb4), found in Streptococcus agalactiae serotype V (strain ATCC BAA-611 / 2603 V/R).